The primary structure comprises 529 residues: Peptide chain release factor 3 (529 aa).

A tr-type G domain is found at 11–280 (SKRRTFAIIS…SLIKWAPSPI (270 aa)). GTP contacts are provided by residues 20–27 (SHPDAGKT), 88–92 (DTPGH), and 142–145 (NKLD).

Belongs to the TRAFAC class translation factor GTPase superfamily. Classic translation factor GTPase family. PrfC subfamily.

The protein resides in the cytoplasm. Increases the formation of ribosomal termination complexes and stimulates activities of RF-1 and RF-2. It binds guanine nucleotides and has strong preference for UGA stop codons. It may interact directly with the ribosome. The stimulation of RF-1 and RF-2 is significantly reduced by GTP and GDP, but not by GMP. The polypeptide is Peptide chain release factor 3 (Buchnera aphidicola subsp. Schizaphis graminum (strain Sg)).